A 172-amino-acid polypeptide reads, in one-letter code: Acetolactate synthase small subunit (172 aa).

The region spanning 4-79 (IITLTVVNRS…DVLKVTDITN (76 aa)) is the ACT domain.

This sequence belongs to the acetolactate synthase small subunit family. In terms of assembly, dimer of large and small chains.

The catalysed reaction is 2 pyruvate + H(+) = (2S)-2-acetolactate + CO2. It functions in the pathway amino-acid biosynthesis; L-isoleucine biosynthesis; L-isoleucine from 2-oxobutanoate: step 1/4. It participates in amino-acid biosynthesis; L-valine biosynthesis; L-valine from pyruvate: step 1/4. This chain is Acetolactate synthase small subunit (ilvH), found in Bacillus subtilis (strain 168).